Reading from the N-terminus, the 413-residue chain is Histidine--tRNA ligase (413 aa).

It belongs to the class-II aminoacyl-tRNA synthetase family. As to quaternary structure, homodimer.

It is found in the cytoplasm. The enzyme catalyses tRNA(His) + L-histidine + ATP = L-histidyl-tRNA(His) + AMP + diphosphate + H(+). In Fusobacterium nucleatum subsp. nucleatum (strain ATCC 25586 / DSM 15643 / BCRC 10681 / CIP 101130 / JCM 8532 / KCTC 2640 / LMG 13131 / VPI 4355), this protein is Histidine--tRNA ligase.